A 312-amino-acid chain; its full sequence is DNA-directed RNA polymerase subunit alpha (312 aa).

Residues 1 to 229 (MLQYQIDRIE…ELFQPLATVT (229 aa)) form an alpha N-terminal domain (alpha-NTD) region. The alpha C-terminal domain (alpha-CTD) stretch occupies residues 246–312 (IPLEELNLSV…ISIPQSRTSA (67 aa)).

It belongs to the RNA polymerase alpha chain family. As to quaternary structure, in cyanobacteria the RNAP catalytic core is composed of 2 alpha, 1 beta, 1 beta', 1 gamma and 1 omega subunit. When a sigma factor is associated with the core the holoenzyme is formed, which can initiate transcription.

It catalyses the reaction RNA(n) + a ribonucleoside 5'-triphosphate = RNA(n+1) + diphosphate. In terms of biological role, DNA-dependent RNA polymerase catalyzes the transcription of DNA into RNA using the four ribonucleoside triphosphates as substrates. The polypeptide is DNA-directed RNA polymerase subunit alpha (Prochlorococcus marinus (strain SARG / CCMP1375 / SS120)).